The sequence spans 319 residues: HTH-type transcriptional regulator YidZ (319 aa).

Residues 8–65 (LDLNLLLCLQLLMQERSVTKAAKRMNVTPSAVSKSLAKLRAWFDDPLFVNTPLGLAPT) enclose the HTH lysR-type domain. Residues 25-44 (VTKAAKRMNVTPSAVSKSLA) constitute a DNA-binding region (H-T-H motif).

It belongs to the LysR transcriptional regulatory family.

Functionally, involved in anaerobic NO protection. The polypeptide is HTH-type transcriptional regulator YidZ (Salmonella agona (strain SL483)).